Reading from the N-terminus, the 312-residue chain is Small ribosomal subunit protein uS2 (312 aa).

The protein belongs to the universal ribosomal protein uS2 family.

The protein is Small ribosomal subunit protein uS2 of Ruthia magnifica subsp. Calyptogena magnifica.